We begin with the raw amino-acid sequence, 422 residues long: L-threonine dehydratase biosynthetic IlvA (422 aa).

Lys56 carries the N6-(pyridoxal phosphate)lysine modification. Pyridoxal 5'-phosphate is bound by residues Asn83, 189-193, and Ser315; that span reads GGGGL. The ACT-like domain maps to 339–413; sequence HYFILNFPQR…FDPSNIYINE (75 aa).

This sequence belongs to the serine/threonine dehydratase family. Homotetramer. Requires pyridoxal 5'-phosphate as cofactor.

The enzyme catalyses L-threonine = 2-oxobutanoate + NH4(+). The protein operates within amino-acid biosynthesis; L-isoleucine biosynthesis; 2-oxobutanoate from L-threonine: step 1/1. Its function is as follows. Catalyzes the anaerobic formation of alpha-ketobutyrate and ammonia from threonine in a two-step reaction. The first step involved a dehydration of threonine and a production of enamine intermediates (aminocrotonate), which tautomerizes to its imine form (iminobutyrate). Both intermediates are unstable and short-lived. The second step is the nonenzymatic hydrolysis of the enamine/imine intermediates to form 2-ketobutyrate and free ammonia. In the low water environment of the cell, the second step is accelerated by RidA. The polypeptide is L-threonine dehydratase biosynthetic IlvA (ilvA) (Staphylococcus aureus (strain NCTC 8325 / PS 47)).